The chain runs to 426 residues: MIDQRLLRENPNLISEGLKSRGMDVDLGPLQKFCKDLKDLEEKRNSLQAQGNSIGKEVGQKIKQGLPHDSEEISNLRVKGNQIKKQVGIIEEEEKSISNKLNEQILCLPNLPEKNSLEGKNEKDNKELRRWGEPISGNTLKEHWEIANQLNLWDSERSSVIAKSRFVTLFKHAAKLERSLINFMLDLHIKKGYLEVLPPALVNTASLTGSGQLPKFAEESFRCADDDLWLTPTAEVPITSLHRGEIIPRDLLPLKYVAYSPCFRREAGSYGRDTRGLIRLHQFNKVELYWFSTPETSEDALEQITSDAESVLQELELPYRVIQLCTGDLGFSAKKTYDLEVWLPGANTFREISSCSNCGDFQARRSSIRTKDNNKKNILLHTLNGSGLAIGRTMAAILENGQQSDGSINLPKALIPYFGSNKLQPE.

L-serine is bound at residue 233–235; it reads TAE. 264 to 266 contacts ATP; sequence RRE. Glutamate 287 contributes to the L-serine binding site. 351–354 contacts ATP; it reads EISS. Serine 386 contacts L-serine.

Belongs to the class-II aminoacyl-tRNA synthetase family. Type-1 seryl-tRNA synthetase subfamily. In terms of assembly, homodimer. The tRNA molecule binds across the dimer.

The protein resides in the cytoplasm. The catalysed reaction is tRNA(Ser) + L-serine + ATP = L-seryl-tRNA(Ser) + AMP + diphosphate + H(+). The enzyme catalyses tRNA(Sec) + L-serine + ATP = L-seryl-tRNA(Sec) + AMP + diphosphate + H(+). Its pathway is aminoacyl-tRNA biosynthesis; selenocysteinyl-tRNA(Sec) biosynthesis; L-seryl-tRNA(Sec) from L-serine and tRNA(Sec): step 1/1. Functionally, catalyzes the attachment of serine to tRNA(Ser). Is also able to aminoacylate tRNA(Sec) with serine, to form the misacylated tRNA L-seryl-tRNA(Sec), which will be further converted into selenocysteinyl-tRNA(Sec). The sequence is that of Serine--tRNA ligase from Prochlorococcus marinus (strain NATL1A).